The primary structure comprises 256 residues: Thiazole synthase (256 aa).

Residue Lys-96 is the Schiff-base intermediate with DXP of the active site. 1-deoxy-D-xylulose 5-phosphate contacts are provided by residues Gly-157, 184-185, and 206-207; these read AG and NT.

Belongs to the ThiG family. As to quaternary structure, homotetramer. Forms heterodimers with either ThiH or ThiS.

The protein resides in the cytoplasm. The catalysed reaction is [ThiS sulfur-carrier protein]-C-terminal-Gly-aminoethanethioate + 2-iminoacetate + 1-deoxy-D-xylulose 5-phosphate = [ThiS sulfur-carrier protein]-C-terminal Gly-Gly + 2-[(2R,5Z)-2-carboxy-4-methylthiazol-5(2H)-ylidene]ethyl phosphate + 2 H2O + H(+). It functions in the pathway cofactor biosynthesis; thiamine diphosphate biosynthesis. Functionally, catalyzes the rearrangement of 1-deoxy-D-xylulose 5-phosphate (DXP) to produce the thiazole phosphate moiety of thiamine. Sulfur is provided by the thiocarboxylate moiety of the carrier protein ThiS. In vitro, sulfur can be provided by H(2)S. This Brucella suis (strain ATCC 23445 / NCTC 10510) protein is Thiazole synthase.